Consider the following 535-residue polypeptide: Arylsulfatase G (535 aa).

The N-terminal stretch at 1-18 is a signal peptide; it reads MGWLFLKVLFLGVTFLGC. Positions 44, 45, and 84 each coordinate Ca(2+). Cys-84 acts as the Nucleophile in catalysis. Cys-84 bears the 3-oxoalanine (Cys) mark. N-linked (GlcNAc...) asparagine glycosylation occurs at Asn-117. Lys-137 contacts substrate. His-139 is a catalytic residue. A substrate-binding site is contributed by Ser-162. N-linked (GlcNAc...) asparagine glycosylation is present at Asn-215. His-251 provides a ligand contact to substrate. Ca(2+)-binding residues include Asp-302 and Asn-303. Residues Asn-356 and Asn-497 are each glycosylated (N-linked (GlcNAc...) asparagine).

Belongs to the sulfatase family. Ca(2+) is required as a cofactor. Post-translationally, N-glycosylated with both high mannose and complex type sugars. In terms of processing, the conversion to 3-oxoalanine (also known as C-formylglycine, FGly), of a serine or cysteine residue in prokaryotes and of a cysteine residue in eukaryotes, is critical for catalytic activity. The 63-kDa precursor undergoes proteolytic processing in two steps, yielding two fragments in the first step (apparent molecular masses of 44 and 18 kDa). In the second step, the 44-kDa fragment is processed further to the 34- and 10-kDa chains. The 10-kDa chain is a cleavage product of the 44-kDa fragment but linked to the 18-kDa chain through a disulfide bridge.

The protein resides in the lysosome. The enzyme catalyses an aryl sulfate + H2O = a phenol + sulfate + H(+). The catalysed reaction is Hydrolysis of the 3-sulfate groups of the N-sulfo-D-glucosamine 3-O-sulfate units of heparin.. Displays arylsulfatase activity with pseudosubstrates at acidic pH, such as p-nitrocatechol sulfate. Catalyzes the hydrolysis of the 3-sulfate groups of the N-sulfo-D-glucosamine 3-O-sulfate units of heparin. This is Arylsulfatase G (ARSG) from Canis lupus familiaris (Dog).